Consider the following 1598-residue polypeptide: Mushroom body large-type Kenyon cell-specific protein 1 (1598 aa).

Disordered regions lie at residues 83–105 (PGNLEQIGSRPLHPPASSTSLPA), 140–387 (RHHH…SDGI), 436–462 (PHDDQPPLSPQSDSSSSSRSAESPMSV), and 495–525 (PLVGVQPHQDSATPADQPLDLSAKPKNSQDN). A compositionally biased stretch (basic residues) spans 140-151 (RHHHLQNHHHHL). A compositionally biased stretch (low complexity) spans 164-174 (QQQQQQQQRQQ). Basic and acidic residues predominate over residues 175–191 (QRQEERRLRPDEIKVEV). The span at 210–263 (STDASTPATVTTTGATTTLPAASATGTGPATPSAVVATSNATAAMTTGTTTIPT) shows a compositional bias: low complexity. Residues 275-291 (EGADDRDDDEENEEEED) are compositionally biased toward acidic residues. 3 stretches are compositionally biased toward basic and acidic residues: residues 292–305 (GRGQSEAEKRLKLD), 315–324 (LRREKDRGSR), and 335–346 (DGTKERTEEVAL). Ser-444 carries the post-translational modification Phosphoserine; by MAPK. Low complexity predominate over residues 445–461 (PQSDSSSSSRSAESPMS). The HTH psq-type 1 domain maps to 582–634 (VGAGGGRRAYTEEELQAALRDIQSGKLGTRRAAVIYGIPRSTLRNKVYKLAME). Positions 610–630 (TRRAAVIYGIPRSTLRNKVYK) form a DNA-binding region, H-T-H motif. Disordered regions lie at residues 636–705 (ERDA…SGAE), 797–877 (RLSK…DSAQ), 962–1045 (GQTV…NYDR), 1082–1145 (ERHL…NGIK), 1248–1283 (ETSAGTSNSRGAAQMSKVPRDVSEGIYDGSGANGSF), and 1301–1598 (RAMT…SVEQ). A compositionally biased stretch (low complexity) spans 653–687 (APATTITTITTTTTTTTTTTTTTTTPNTTQNASAT). Acidic residues predominate over residues 694–705 (DEVDDKELSGAE). A compositionally biased stretch (low complexity) spans 820–855 (THPQAQAQAQPQQQQQQQQQQPQQQQQQQQQQQQQQ). Residues 965-975 (VSGGGMGGCQP) show a composition bias toward gly residues. Low complexity predominate over residues 1003–1021 (ANAQQGQAQAQAKPQSQEA). The 53-residue stretch at 1034–1086 (RPKRGKYRNYDRDSLVEAVRAVQRGEMSVHRAGSYYGVPHSTLEYKVKERHLM) folds into the HTH psq-type 2 domain. The segment at residues 1062-1082 (VHRAGSYYGVPHSTLEYKVKE) is a DNA-binding region (H-T-H motif). A compositionally biased stretch (basic and acidic residues) spans 1093-1102 (QKQSDDKTKE). The span at 1103-1120 (TSTVTAAAAATNIRPGTA) shows a compositional bias: low complexity. Residues 1309 to 1318 (QQQQASSQQQ) are compositionally biased toward low complexity. 2 stretches are compositionally biased toward basic and acidic residues: residues 1383–1392 (DRGRNDDGSD) and 1407–1442 (GSRDEDSTRDSTKLDRSSREREVHNGGQQEDRDRKT). The segment covering 1447–1466 (PQQPQQQQQQQQQQQQQQQQ) has biased composition (low complexity). A compositionally biased stretch (basic and acidic residues) spans 1481–1497 (TDKKSACDSKLIVDHSS). The segment covering 1501-1547 (QQQQPQQQQQQQQQQQPQQQSQQPQQQQPQPQQQQQQQQQQQPQQQQ) has biased composition (low complexity). Positions 1562–1577 (RGYNSGNNRSGEQANS) are enriched in polar residues.

In terms of assembly, homodimer. As to expression, large-type Kenyon cells of mushroom body.

The protein resides in the nucleus. Its function is as follows. Transcriptional activator which binds to the consensus sequence 5'-CCCTATCGATCGATCTCTACCT-3'. May play a role in higher-order sensory processing. The polypeptide is Mushroom body large-type Kenyon cell-specific protein 1 (Mblk-1) (Apis mellifera (Honeybee)).